A 400-amino-acid polypeptide reads, in one-letter code: Phosphoglycerate kinase (400 aa).

Substrate-binding positions include 23–25 (DLN), arginine 38, 61–64 (HFGR), arginine 120, and arginine 153. Residues lysine 203, glutamate 325, and 355–358 (GGDT) contribute to the ATP site.

This sequence belongs to the phosphoglycerate kinase family. Monomer.

It is found in the cytoplasm. It catalyses the reaction (2R)-3-phosphoglycerate + ATP = (2R)-3-phospho-glyceroyl phosphate + ADP. It functions in the pathway carbohydrate degradation; glycolysis; pyruvate from D-glyceraldehyde 3-phosphate: step 2/5. The sequence is that of Phosphoglycerate kinase from Rhizobium leguminosarum bv. trifolii (strain WSM2304).